We begin with the raw amino-acid sequence, 433 residues long: Tol-Pal system protein TolB (433 aa).

The signal sequence occupies residues 1-21 (MRNLLRGMLVVICCMAGIVMA).

Belongs to the TolB family. The Tol-Pal system is composed of five core proteins: the inner membrane proteins TolA, TolQ and TolR, the periplasmic protein TolB and the outer membrane protein Pal. They form a network linking the inner and outer membranes and the peptidoglycan layer.

Its subcellular location is the periplasm. Part of the Tol-Pal system, which plays a role in outer membrane invagination during cell division and is important for maintaining outer membrane integrity. This Pseudomonas fluorescens (strain Pf0-1) protein is Tol-Pal system protein TolB.